Consider the following 876-residue polypeptide: Valine--tRNA ligase (876 aa).

Positions 44 to 54 match the 'HIGH' region motif; that stretch reads PNVTGKLHLGH. Positions 520–524 match the 'KMSKS' region motif; it reads KMSKS. Lysine 523 contacts ATP. Residues 805–876 are a coiled coil; the sequence is LEGLIDMDKE…VKSRIEQLKA (72 aa).

Belongs to the class-I aminoacyl-tRNA synthetase family. ValS type 1 subfamily. Monomer.

It is found in the cytoplasm. It catalyses the reaction tRNA(Val) + L-valine + ATP = L-valyl-tRNA(Val) + AMP + diphosphate. Its function is as follows. Catalyzes the attachment of valine to tRNA(Val). As ValRS can inadvertently accommodate and process structurally similar amino acids such as threonine, to avoid such errors, it has a 'posttransfer' editing activity that hydrolyzes mischarged Thr-tRNA(Val) in a tRNA-dependent manner. The chain is Valine--tRNA ligase from Staphylococcus epidermidis (strain ATCC 35984 / DSM 28319 / BCRC 17069 / CCUG 31568 / BM 3577 / RP62A).